A 219-amino-acid chain; its full sequence is Vacuolar iron transporter homolog 2.1 (219 aa).

Over residues 1–15 the composition is skewed to polar residues; the sequence is MTSNVQLSETNSPRN. The tract at residues 1–26 is disordered; it reads MTSNVQLSETNSPRNQKTRPRAEKEE. An N-acetylthreonine modification is found at Thr-2. Topologically, residues 2–37 are cytoplasmic; that stretch reads TSNVQLSETNSPRNQKTRPRAEKEEVDYMQRAQWLR. A helical membrane pass occupies residues 38–58; that stretch reads AALLGANDGLVTVASLMMGVG. The Vacuolar portion of the chain corresponds to 59 to 67; sequence SIKEDVKAM. The helical transmembrane segment at 68-88 threads the bilayer; that stretch reads LLVGFAGLVAGACSMAIGEFV. Topologically, residues 89–133 are cytoplasmic; sequence SVCTQRDIETAQMKRAIEHKTSLSAIDEQEEEEKKERLPNPGQAA. Residues 134–154 form a helical membrane-spanning segment; the sequence is IASALAFSVGAAMPLLGAVFI. The Vacuolar segment spans residues 155-161; it reads ENHKVRM. Residues 162–182 form a helical membrane-spanning segment; sequence VVVAVVATIALVVFGVTGAVL. Residues 183–193 are Cytoplasmic-facing; the sequence is GKTSVVKSSVR. A helical transmembrane segment spans residues 194–214; it reads VVIGGWMAMALTFGLTKFIGS. Residues 215-219 are Vacuolar-facing; the sequence is AAMQI.

Belongs to the CCC1 family. As to expression, highly expressed in roots. inflorescences and at lower levels in leaves.

Its subcellular location is the vacuole membrane. The enzyme catalyses Fe(2+)(in) = Fe(2+)(out). In terms of biological role, vacuolar iron transporter involved in the transfer of iron ions from the cytosol to the vacuole for intracellular iron storage. Involved in regulation of cellular iron homeostasis. Vacuolar iron storage is required for seed embryo and seedling development. This is Vacuolar iron transporter homolog 2.1 from Arabidopsis thaliana (Mouse-ear cress).